The following is a 109-amino-acid chain: Nucleoid-associated protein AHA_2212 (109 aa).

2 disordered regions span residues 1–23 (MFGK…RMQK) and 88–109 (NKSK…KMPF). Residues 11–23 (MKQAQQMQERMQK) are compositionally biased toward low complexity.

The protein belongs to the YbaB/EbfC family. As to quaternary structure, homodimer.

It is found in the cytoplasm. The protein resides in the nucleoid. Binds to DNA and alters its conformation. May be involved in regulation of gene expression, nucleoid organization and DNA protection. In Aeromonas hydrophila subsp. hydrophila (strain ATCC 7966 / DSM 30187 / BCRC 13018 / CCUG 14551 / JCM 1027 / KCTC 2358 / NCIMB 9240 / NCTC 8049), this protein is Nucleoid-associated protein AHA_2212.